Here is a 733-residue protein sequence, read N- to C-terminus: Phosphoribosylformylglycinamidine synthase subunit PurL (733 aa).

H44 is an active-site residue. Residues Y47 and K86 each coordinate ATP. E88 contributes to the Mg(2+) binding site. Residues 89 to 92 (SHNH) and R111 each bind substrate. Residue H90 is the Proton acceptor of the active site. D112 contributes to the Mg(2+) binding site. Q240 provides a ligand contact to substrate. Residue D268 participates in Mg(2+) binding. Position 312–314 (312–314 (ESQ)) interacts with substrate. D496 and G533 together coordinate ATP. Residue N534 participates in Mg(2+) binding. S536 serves as a coordination point for substrate.

Belongs to the FGAMS family. Monomer. Part of the FGAM synthase complex composed of 1 PurL, 1 PurQ and 2 PurS subunits.

The protein resides in the cytoplasm. It catalyses the reaction N(2)-formyl-N(1)-(5-phospho-beta-D-ribosyl)glycinamide + L-glutamine + ATP + H2O = 2-formamido-N(1)-(5-O-phospho-beta-D-ribosyl)acetamidine + L-glutamate + ADP + phosphate + H(+). It functions in the pathway purine metabolism; IMP biosynthesis via de novo pathway; 5-amino-1-(5-phospho-D-ribosyl)imidazole from N(2)-formyl-N(1)-(5-phospho-D-ribosyl)glycinamide: step 1/2. Functionally, part of the phosphoribosylformylglycinamidine synthase complex involved in the purines biosynthetic pathway. Catalyzes the ATP-dependent conversion of formylglycinamide ribonucleotide (FGAR) and glutamine to yield formylglycinamidine ribonucleotide (FGAM) and glutamate. The FGAM synthase complex is composed of three subunits. PurQ produces an ammonia molecule by converting glutamine to glutamate. PurL transfers the ammonia molecule to FGAR to form FGAM in an ATP-dependent manner. PurS interacts with PurQ and PurL and is thought to assist in the transfer of the ammonia molecule from PurQ to PurL. This Wolinella succinogenes (strain ATCC 29543 / DSM 1740 / CCUG 13145 / JCM 31913 / LMG 7466 / NCTC 11488 / FDC 602W) (Vibrio succinogenes) protein is Phosphoribosylformylglycinamidine synthase subunit PurL.